The primary structure comprises 250 residues: 2-C-methyl-D-erythritol 4-phosphate cytidylyltransferase (250 aa).

Belongs to the IspD/TarI cytidylyltransferase family. IspD subfamily.

It carries out the reaction 2-C-methyl-D-erythritol 4-phosphate + CTP + H(+) = 4-CDP-2-C-methyl-D-erythritol + diphosphate. Its pathway is isoprenoid biosynthesis; isopentenyl diphosphate biosynthesis via DXP pathway; isopentenyl diphosphate from 1-deoxy-D-xylulose 5-phosphate: step 2/6. Catalyzes the formation of 4-diphosphocytidyl-2-C-methyl-D-erythritol from CTP and 2-C-methyl-D-erythritol 4-phosphate (MEP). This Streptomyces avermitilis (strain ATCC 31267 / DSM 46492 / JCM 5070 / NBRC 14893 / NCIMB 12804 / NRRL 8165 / MA-4680) protein is 2-C-methyl-D-erythritol 4-phosphate cytidylyltransferase.